A 545-amino-acid chain; its full sequence is CTP synthase (545 aa).

The segment at 1–266 (MATNYIFVTG…DDFVCERFRL (266 aa)) is amidoligase domain. S14 is a binding site for CTP. S14 is a UTP binding site. Residues 15 to 20 (SLGKGI) and D72 each bind ATP. Mg(2+) contacts are provided by D72 and E140. CTP contacts are provided by residues 147–149 (DIE), 187–192 (KTKPTQ), and K223. Residues 187–192 (KTKPTQ) and K223 contribute to the UTP site. Position 239–241 (239–241 (KDV)) interacts with ATP. One can recognise a Glutamine amidotransferase type-1 domain in the interval 291-542 (TIGMVGKYTE…VKAAYENHKK (252 aa)). G352 serves as a coordination point for L-glutamine. The active-site Nucleophile; for glutamine hydrolysis is C379. L-glutamine-binding positions include 380-383 (LGMQ), E403, and R470. Active-site residues include H515 and E517.

This sequence belongs to the CTP synthase family. Homotetramer.

It catalyses the reaction UTP + L-glutamine + ATP + H2O = CTP + L-glutamate + ADP + phosphate + 2 H(+). The catalysed reaction is L-glutamine + H2O = L-glutamate + NH4(+). It carries out the reaction UTP + NH4(+) + ATP = CTP + ADP + phosphate + 2 H(+). Its pathway is pyrimidine metabolism; CTP biosynthesis via de novo pathway; CTP from UDP: step 2/2. With respect to regulation, allosterically activated by GTP, when glutamine is the substrate; GTP has no effect on the reaction when ammonia is the substrate. The allosteric effector GTP functions by stabilizing the protein conformation that binds the tetrahedral intermediate(s) formed during glutamine hydrolysis. Inhibited by the product CTP, via allosteric rather than competitive inhibition. In terms of biological role, catalyzes the ATP-dependent amination of UTP to CTP with either L-glutamine or ammonia as the source of nitrogen. Regulates intracellular CTP levels through interactions with the four ribonucleotide triphosphates. The polypeptide is CTP synthase (Haemophilus influenzae (strain ATCC 51907 / DSM 11121 / KW20 / Rd)).